The chain runs to 479 residues: Replication factor C large subunit (479 aa).

50–57 (GPPGSGKT) contacts ATP. Residues 420-468 (EKIRKERKEEEKVEVREEKPEEKVEEKREERETKKEKEKKEEKKAEKKG) are compositionally biased toward basic and acidic residues. Residues 420–479 (EKIRKERKEEEKVEVREEKPEEKVEEKREERETKKEKEKKEEKKAEKKGKQVTLFDFIKK) form a disordered region.

The protein belongs to the activator 1 small subunits family. RfcL subfamily. In terms of assembly, heterohexamer composed of four small subunits (RfcS) and two large subunits (RfcL).

Functionally, part of the RFC clamp loader complex which loads the PCNA sliding clamp onto DNA. The complex possesses DNA-independent ATPase activity. The polypeptide is Replication factor C large subunit (rfcL) (Pyrococcus abyssi (strain GE5 / Orsay)).